Reading from the N-terminus, the 937-residue chain is Valine--tRNA ligase (937 aa).

The short motif at 44–54 is the 'HIGH' region element; the sequence is PNVTGTLHMGH. Positions 548–552 match the 'KMSKS' region motif; it reads KMSKS. Lysine 551 contacts ATP. The stretch at 874 to 937 forms a coiled coil; it reads AAETARLTKE…KLKAQLLKLA (64 aa).

The protein belongs to the class-I aminoacyl-tRNA synthetase family. ValS type 1 subfamily. As to quaternary structure, monomer.

It localises to the cytoplasm. It catalyses the reaction tRNA(Val) + L-valine + ATP = L-valyl-tRNA(Val) + AMP + diphosphate. Functionally, catalyzes the attachment of valine to tRNA(Val). As ValRS can inadvertently accommodate and process structurally similar amino acids such as threonine, to avoid such errors, it has a 'posttransfer' editing activity that hydrolyzes mischarged Thr-tRNA(Val) in a tRNA-dependent manner. The sequence is that of Valine--tRNA ligase from Laribacter hongkongensis (strain HLHK9).